The primary structure comprises 2225 residues: Multifunctional protein pyr1-3 (2225 aa).

At methionine 1 the chain carries N-acetylmethionine. Positions 40-390 are GATase (Glutamine amidotransferase); it reads MVGYNESISD…NVCGEQQHKS (351 aa). The L-glutamine site is built by serine 51, glycine 245, and glycine 247. Residues 196–388 form the Glutamine amidotransferase type-1 domain; it reads KVIVLDCGIK…VDNVCGEQQH (193 aa). Cysteine 275 acts as the Nucleophile; for GATase activity in catalysis. L-glutamine-binding residues include glutamine 279, asparagine 317, glycine 319, and phenylalanine 320. Catalysis depends on for GATase activity residues histidine 361 and glutamate 363. A linker region spans residues 391–405; it reads PMNKSKIIDCPKGIN. The segment at 406–948 is CPSase A; sequence KVLILGSGGL…TNDVNINEKS (543 aa). Residues 406–1461 are CPSase (Carbamoyl-phosphate synthase); that stretch reads KVLILGSGGL…MKGPMPIENV (1056 aa). ATP-binding residues include arginine 526, arginine 566, glycine 572, glycine 573, lysine 603, glutamate 610, glycine 636, isoleucine 637, histidine 638, glutamine 679, and glutamate 693. 2 ATP-grasp domains span residues 530-722 and 1069-1260; these read AEKL…KVAL and SRLL…KIII. Positions 679, 693, and 695 each coordinate Mg(2+). Glutamine 679, glutamate 693, and asparagine 695 together coordinate Mn(2+). The CPSase B stretch occupies residues 949 to 1461; that stretch reads YITLGSGSYR…MKGPMPIENV (513 aa). The ATP site is built by arginine 1105, lysine 1144, isoleucine 1146, glutamate 1151, glycine 1176, valine 1177, histidine 1178, serine 1179, glutamine 1219, and glutamate 1231. Glutamine 1219, glutamate 1231, and asparagine 1233 together coordinate Mg(2+). Mn(2+) contacts are provided by glutamine 1219, glutamate 1231, and asparagine 1233. Positions 1324 to 1470 constitute an MGS-like domain; the sequence is FKAPEKNVLL…VDWRTSNKII (147 aa). The tract at residues 1463–1797 is DHOase (dihydroorotase); the sequence is WRTSNKIIRL…VRGKVVKVVL (335 aa). Histidine 1479 and histidine 1481 together coordinate Zn(2+). Positions 1483 and 1513 each coordinate (S)-dihydroorotate. Positions 1564, 1599, 1622, 1623, and 1646 each coordinate Zn(2+). At lysine 1564 the chain carries N6-carboxylysine. Arginine 1670 serves as a coordination point for (S)-dihydroorotate. Aspartate 1695 provides a ligand contact to Zn(2+). Aspartate 1695 functions as the For DHOase activity in the catalytic mechanism. Residues histidine 1699 and proline 1711 each contribute to the (S)-dihydroorotate site. Residues 1798–1916 are linker; sequence RGQIAFIDGK…DTLQTAFNIS (119 aa). The ATCase (Aspartate transcarbamylase) stretch occupies residues 1917 to 2225; it reads DNSLAGKHIF…LLALVFGAGV (309 aa). Residues arginine 1974 and threonine 1975 each coordinate carbamoyl phosphate. An L-aspartate-binding site is contributed by lysine 2002. The carbamoyl phosphate site is built by arginine 2023, histidine 2051, and glutamine 2054. 2 residues coordinate L-aspartate: arginine 2084 and arginine 2145. Carbamoyl phosphate contacts are provided by leucine 2184 and proline 2185.

It in the N-terminal section; belongs to the CarA family. The protein in the 2nd section; belongs to the CarB family. This sequence in the 3rd section; belongs to the metallo-dependent hydrolases superfamily. DHOase family. CAD subfamily. In the C-terminal section; belongs to the aspartate/ornithine carbamoyltransferase superfamily. ATCase family. As to quaternary structure, homohexamer. Mg(2+) serves as cofactor. Requires Mn(2+) as cofactor. Zn(2+) is required as a cofactor.

The protein resides in the cytoplasm. The enzyme catalyses hydrogencarbonate + L-glutamine + 2 ATP + H2O = carbamoyl phosphate + L-glutamate + 2 ADP + phosphate + 2 H(+). It carries out the reaction L-glutamine + H2O = L-glutamate + NH4(+). The catalysed reaction is hydrogencarbonate + NH4(+) + 2 ATP = carbamoyl phosphate + 2 ADP + phosphate + 2 H(+). It catalyses the reaction carbamoyl phosphate + L-aspartate = N-carbamoyl-L-aspartate + phosphate + H(+). The enzyme catalyses (S)-dihydroorotate + H2O = N-carbamoyl-L-aspartate + H(+). The protein operates within pyrimidine metabolism; UMP biosynthesis via de novo pathway; (S)-dihydroorotate from bicarbonate: step 1/3. It participates in pyrimidine metabolism; UMP biosynthesis via de novo pathway; (S)-dihydroorotate from bicarbonate: step 2/3. It functions in the pathway pyrimidine metabolism; UMP biosynthesis via de novo pathway; (S)-dihydroorotate from bicarbonate: step 3/3. Allosterically regulated and controlled by phosphorylation. 5-phosphoribose 1-diphosphate is an activator while UMP is an inhibitor of the CPSase reaction. In terms of biological role, multifunctional protein that encodes the first 3 enzymatic activities of the de novo pyrimidine pathway: carbamoylphosphate synthetase (CPSase; EC 6.3.5.5), aspartate transcarbamylase (ATCase; EC 2.1.3.2) and dihydroorotase (DHOase; EC 3.5.2.3). The CPSase-function is accomplished in 2 steps, by a glutamine-dependent amidotransferase activity (GATase) that binds and cleaves glutamine to produce ammonia, followed by an ammonium-dependent carbamoyl phosphate synthetase, which reacts with the ammonia, hydrogencarbonate and ATP to form carbamoyl phosphate. The endogenously produced carbamoyl phosphate is sequestered and channeled to the ATCase active site. ATCase then catalyzes the formation of carbamoyl-L-aspartate from L-aspartate and carbamoyl phosphate. In the last step, DHOase catalyzes the cyclization of carbamoyl aspartate to dihydroorotate. This chain is Multifunctional protein pyr1-3 (pyr1-3), found in Dictyostelium discoideum (Social amoeba).